We begin with the raw amino-acid sequence, 494 residues long: Sugar phosphate exchanger 3 (494 aa).

The helical transmembrane segment at 10–30 threads the bilayer; it reads GALLTSFSHHHLAVFLLTFFS. N-linked (GlcNAc...) asparagine glycosylation is present at Asn-58. The next 5 helical transmembrane spans lie at 81-101, 113-133, 146-166, 177-197, and 209-229; these read TLFL…GLFI, WVLS…GTLT, GLWI…VAVM, VVFG…AFLA, and FLVT…GLLV. Positions 240-261 are disordered; that stretch reads GAEESSEEDSQRPLIDGAENED. 6 helical membrane passes run 297-317, 333-353, 357-377, 386-406, 428-448, and 457-477; these read LAYA…PFYL, IWYD…SDVL, APVL…YSRS, LLMT…SSAI, GIVD…VSLI, and VFYF…PLIV.

The protein belongs to the major facilitator superfamily. Organophosphate:Pi antiporter (OPA) (TC 2.A.1.4) family. In terms of assembly, interacts with ATRAID; the interaction is direct and both proteins are mutually dependent for their stability. Glycosylated.

It is found in the endoplasmic reticulum membrane. It localises to the lysosome membrane. Unlike the other SLC37 members, lacks glucose-6-phosphate antiporter activity. In osteoclasts, forms a transporter complex with ATRAID for nitrogen-containing-bisphophonates (N-BPs) required for releasing N-BP molecules that have trafficked to lysosomes through fluid-phase endocytosis into the cytosol. This is Sugar phosphate exchanger 3 (Slc37a3) from Mus musculus (Mouse).